The chain runs to 690 residues: Rho guanine nucleotide exchange factor 4 (690 aa).

The tract at residues 73 to 126 (KTQRKKLQKQAHVERRLHIGAVHKDGVKCWRKTIITSPESLNLPRRSHPLSQSA) is ABR (APC-binding region) domain. The tract at residues 113–145 (LNLPRRSHPLSQSAPTGLNHMGWPEHTPGTAMP) is disordered. One can recognise an SH3 domain in the interval 194–253 (GSVVCAEALWDHVTMDDQELGFKAGDVIEVMDATNREWWWGRVADGEGWFPASFVRLRVN). The interval 257–282 (PADDDAPLAGNSGAEDGGAEAQSSKD) is disordered. In terms of domain architecture, DH spans 284 to 468 (MRTNVINEIL…KNVAQLINER (185 aa)). In terms of domain architecture, PH spans 499-606 (ELIYSGELTR…WLKAFARERE (108 aa)).

In terms of assembly, isoform 3 interacts with RHOA and RAC1, and (via ABR domain) with APC. Found in a complex consisting of ARHGEF4, APC and CTNNB1. In terms of tissue distribution, expressed at high levels in the brain, skeletal muscle and testis and at low levels in the kidney, lung, small intestine, ovary and prostate. Expression is aberrantly enhanced in most colorectal tumors.

The protein resides in the cytoplasm. It localises to the cell projection. The protein localises to the ruffle membrane. Functionally, acts as a guanine nucleotide exchange factor (GEF) for RHOA, RAC1 and CDC42 GTPases. Binding of APC may activate RAC1 GEF activity. The APC-ARHGEF4 complex seems to be involved in cell migration as well as in E-cadherin-mediated cell-cell adhesion. Required for MMP9 up-regulation via the JNK signaling pathway in colorectal tumor cells. Involved in tumor angiogenesis and may play a role in intestinal adenoma formation and tumor progression. The polypeptide is Rho guanine nucleotide exchange factor 4 (ARHGEF4) (Homo sapiens (Human)).